We begin with the raw amino-acid sequence, 235 residues long: Small ribosomal subunit protein mS23 (235 aa).

Residues 51-71 are disordered; sequence PYPIQHTEPKDRGRAAQRPRN.

It belongs to the mitochondrion-specific ribosomal protein mS23 family. As to quaternary structure, component of the mitochondrial small ribosomal subunit.

It localises to the mitochondrion. This Chaetomium globosum (strain ATCC 6205 / CBS 148.51 / DSM 1962 / NBRC 6347 / NRRL 1970) (Soil fungus) protein is Small ribosomal subunit protein mS23 (RSM25).